A 751-amino-acid polypeptide reads, in one-letter code: Cytosolic neutral trehalase (751 aa).

The segment covering 1-10 (MSQVNTSQGP) has biased composition (polar residues). The disordered stretch occupies residues 1–59 (MSQVNTSQGPVAQGRQRRLSSLSEFNDPFSNAEVYYGPPTDPRKQKQAKPAKINRTRTM). Ser-2 carries the N-acetylserine modification. Residues Ser-20 and Ser-21 each carry the phosphoserine; by PKA modification. The residue at position 23 (Ser-23) is a Phosphoserine. Residues 45-55 (QKQAKPAKINR) show a composition bias toward basic residues. Thr-58 is modified (phosphothreonine). A Phosphoserine; by PKA modification is found at Ser-60. Phosphoserine is present on Ser-66. Residues 73 to 92 (FGKLQQTRRGSEDDTYSSSQ) form a disordered region. Residue Ser-83 is modified to Phosphoserine; by PKA. Positions 114, 116, 118, 120, and 125 each coordinate Ca(2+). Residues Arg-302, 309–310 (WD), Asn-346, 355–357 (RSQ), Glu-424, Arg-473, and Gly-476 each bind substrate. Active-site proton donor/acceptor residues include Asp-478 and Glu-674.

The protein belongs to the glycosyl hydrolase 37 family. In terms of assembly, monomer. Interacts with BMH1 dimers; the interaction is direct and activates NTH1. Interacts with BMH2. Requires Ca(2+) as cofactor. Post-translationally, phosphorylated by protein kinase A (PKA); phosphorylation at Ser-60 and Ser-83 is required for activation by the 14-3-3 proteins BMH1 and BMH2.

It is found in the cytoplasm. The enzyme catalyses alpha,alpha-trehalose + H2O = alpha-D-glucose + beta-D-glucose. Its pathway is carbohydrate degradation. Its activity is regulated as follows. Activated by calcium. Activated by protein kinase A (PKA)-mediated phosphorylation. Its function is as follows. Hydrolyzes intracellular trehalose to glucose. The disaccharide trehalose serves as a storage carbohydrate that is mobilized during nutrient stress. Regulates the level of trehalose as a protectant for cell integrity during heat stress. This is Cytosolic neutral trehalase from Saccharomyces cerevisiae (strain ATCC 204508 / S288c) (Baker's yeast).